We begin with the raw amino-acid sequence, 243 residues long: Protein S40-7 (243 aa).

2 disordered regions span residues 1 to 68 and 107 to 143; these read MNKN…KSGL and SSTASSSSSSGGGASAGSSSSARAIPTAPKPPQERLP. Residues 10 to 20 show a composition bias toward polar residues; that stretch reads SSPSSLATISD. Residues 22–32 show a composition bias toward acidic residues; it reads ADGELNEDDIF. Polar residues predominate over residues 47-67; it reads PVSSPAKQQTPARQLQRSKSG.

The protein belongs to the senescence regulator S40 family.

It is found in the cytoplasm. This chain is Protein S40-7, found in Arabidopsis thaliana (Mouse-ear cress).